The following is an 805-amino-acid chain: Pentatricopeptide repeat-containing protein At4g01570 (805 aa).

PPR repeat units lie at residues S91–L125, D126–L160, N161–S196, G211–M241, D247–R277, D288–P322, D323–P357, D358–A392, S393–V427, D428–V462, D463–P497, D593–D627, T629–A663, D664–L698, D699–P733, and D734–P768.

This sequence belongs to the PPR family. P subfamily.

The chain is Pentatricopeptide repeat-containing protein At4g01570 from Arabidopsis thaliana (Mouse-ear cress).